Reading from the N-terminus, the 470-residue chain is Serine hydroxymethyltransferase, cytosolic (470 aa).

Polar residues predominate over residues 1-11 (MSAYALSQSHR). A disordered region spans residues 1-23 (MSAYALSQSHRQLTEGHLKDTDP). Serine 2 is modified (N-acetylserine). Positions 12 to 23 (QLTEGHLKDTDP) are enriched in basic and acidic residues. At lysine 249 the chain carries N6-(pyridoxal phosphate)lysine.

It belongs to the SHMT family. As to quaternary structure, homotetramer. Pyridoxal 5'-phosphate is required as a cofactor.

The protein resides in the cytoplasm. It catalyses the reaction (6R)-5,10-methylene-5,6,7,8-tetrahydrofolate + glycine + H2O = (6S)-5,6,7,8-tetrahydrofolate + L-serine. The protein operates within one-carbon metabolism; tetrahydrofolate interconversion. In terms of biological role, interconversion of serine and glycine. The protein is Serine hydroxymethyltransferase, cytosolic (SHM2) of Candida albicans (strain SC5314 / ATCC MYA-2876) (Yeast).